The primary structure comprises 193 residues: Oligoribonuclease (193 aa).

An Exonuclease domain is found at 20 to 183 (FVWLDCEMTG…ADVHESIEEL (164 aa)). Tyrosine 141 is a catalytic residue.

Belongs to the oligoribonuclease family.

It localises to the cytoplasm. In terms of biological role, 3'-to-5' exoribonuclease specific for small oligoribonucleotides. This is Oligoribonuclease from Paracidovorax citrulli (strain AAC00-1) (Acidovorax citrulli).